The chain runs to 1168 residues: Carbamoyl phosphate synthase arginine-specific large chain, mitochondrial (1168 aa).

Residues methionine 1 to leucine 51 constitute a mitochondrion transit peptide. The tract at residues arginine 86–aspartate 483 is carboxyphosphate synthetic domain. Residues arginine 213, alanine 243–valine 298, arginine 253, glycine 259, glycine 260, lysine 290, leucine 292, glutamate 297, glycine 323, isoleucine 324, histidine 325, glutamine 366, and glutamate 380 each bind ATP. An ATP-grasp 1 domain is found at alanine 217–leucine 409. Glutamine 366, glutamate 380, and asparagine 382 together coordinate Mg(2+). Mn(2+) is bound by residues glutamine 366, glutamate 380, and asparagine 382. The oligomerization domain stretch occupies residues proline 484 to aspartate 628. Residues valine 629 to methionine 1017 form a carbamoyl phosphate synthetic domain region. Residues serine 754–valine 951 form the ATP-grasp 2 domain. Residues alanine 780 to isoleucine 837, arginine 790, lysine 829, isoleucine 831, glutamate 836, glycine 861, valine 862, histidine 863, serine 864, glutamine 904, and glutamate 922 contribute to the ATP site. Residues glutamine 904, glutamate 922, and asparagine 924 each coordinate Mg(2+). Positions 904, 922, and 924 each coordinate Mn(2+). Residues asparagine 1018–isoleucine 1152 form an allosteric domain region. The 150-residue stretch at phenylalanine 1019–leucine 1168 folds into the MGS-like domain.

The protein belongs to the CarB family. Heterodimer composed of 2 chains; the small (or glutamine) chain promotes the hydrolysis of glutamine to ammonia, which is used by the large (or ammonia) chain to synthesize carbamoyl phosphate. Mg(2+) is required as a cofactor. Mn(2+) serves as cofactor.

The protein resides in the mitochondrion matrix. It carries out the reaction hydrogencarbonate + L-glutamine + 2 ATP + H2O = carbamoyl phosphate + L-glutamate + 2 ADP + phosphate + 2 H(+). It catalyses the reaction hydrogencarbonate + NH4(+) + 2 ATP = carbamoyl phosphate + 2 ADP + phosphate + 2 H(+). Its pathway is amino-acid biosynthesis; L-arginine biosynthesis; carbamoyl phosphate from bicarbonate: step 1/1. Large subunit of the arginine-specific carbamoyl phosphate synthase (CPSase). CPSase catalyzes the formation of carbamoyl phosphate from the ammonia moiety of glutamine, hydrogencarbonate, and phosphate donated by ATP, the first step of the arginine biosynthetic pathway. The large subunit (synthetase) binds the substrates ammonia (free or transferred from glutamine from the small subunit), hydrogencarbonate and ATP and carries out an ATP-coupled ligase reaction, activating hydrogencarbonate by forming carboxy phosphate which reacts with ammonia to form carbamoyl phosphate. The chain is Carbamoyl phosphate synthase arginine-specific large chain, mitochondrial (arg-3) from Neurospora crassa (strain ATCC 24698 / 74-OR23-1A / CBS 708.71 / DSM 1257 / FGSC 987).